The sequence spans 1342 residues: Putative aldehyde oxidase-like protein (1342 aa).

A disordered region spans residues 1–23; sequence MSDCNSGGGERRPNARATDAPPV. The FAD-binding PCMH-type domain occupies 221-408; it reads ISSPREGWYC…LSIFIPHWAS (188 aa).

The protein belongs to the xanthine dehydrogenase family.

The protein is Putative aldehyde oxidase-like protein of Oryza sativa subsp. japonica (Rice).